Here is a 297-residue protein sequence, read N- to C-terminus: Probable endonuclease 4 (297 aa).

Residues His-69, His-110, Glu-145, Asp-179, His-182, His-214, Asp-227, His-229, and Glu-259 each contribute to the Zn(2+) site.

The protein belongs to the AP endonuclease 2 family. Requires Zn(2+) as cofactor.

The enzyme catalyses Endonucleolytic cleavage to 5'-phosphooligonucleotide end-products.. Endonuclease IV plays a role in DNA repair. It cleaves phosphodiester bonds at apurinic or apyrimidinic (AP) sites, generating a 3'-hydroxyl group and a 5'-terminal sugar phosphate. In Listeria monocytogenes serotype 4b (strain F2365), this protein is Probable endonuclease 4.